Reading from the N-terminus, the 375-residue chain is Succinyl-diaminopimelate desuccinylase (375 aa).

Zn(2+) is bound at residue histidine 66. Residue aspartate 68 is part of the active site. Aspartate 99 provides a ligand contact to Zn(2+). Glutamate 133 (proton acceptor) is an active-site residue. Residues glutamate 134, glutamate 162, and histidine 348 each contribute to the Zn(2+) site.

The protein belongs to the peptidase M20A family. DapE subfamily. In terms of assembly, homodimer. Zn(2+) is required as a cofactor. Requires Co(2+) as cofactor.

It catalyses the reaction N-succinyl-(2S,6S)-2,6-diaminopimelate + H2O = (2S,6S)-2,6-diaminopimelate + succinate. The protein operates within amino-acid biosynthesis; L-lysine biosynthesis via DAP pathway; LL-2,6-diaminopimelate from (S)-tetrahydrodipicolinate (succinylase route): step 3/3. Functionally, catalyzes the hydrolysis of N-succinyl-L,L-diaminopimelic acid (SDAP), forming succinate and LL-2,6-diaminopimelate (DAP), an intermediate involved in the bacterial biosynthesis of lysine and meso-diaminopimelic acid, an essential component of bacterial cell walls. The protein is Succinyl-diaminopimelate desuccinylase of Erwinia tasmaniensis (strain DSM 17950 / CFBP 7177 / CIP 109463 / NCPPB 4357 / Et1/99).